The chain runs to 405 residues: Cytochrome b (405 aa).

Residues 44-64 traverse the membrane as a helical segment; the sequence is FGSLAGIAMIIMIATGIFLAM. Heme b contacts are provided by histidine 94 and histidine 108. The next 8 membrane-spanning stretches (helical) occupy residues 97-117, 124-144, 163-183, 191-211, 245-265, 303-323, 338-358, and 368-388; these read GASMFFIVVYVHMFRGLYYGS, VLWWLGLVILLLMMATAFMGY, FSAIPVVGDDIVTLLWGGFSV, FFSLHYLFPMLLFAVVFLHMW, FGLGIFLMVFCFFVFFAPNFF, LGGVLAMFGAILILFVLPWLD, GFFWVFLADCLLLGYLGAMPA, and LATIYYFLHFLVITPLVGWFE. 2 residues coordinate heme b: histidine 195 and histidine 209.

It belongs to the cytochrome b family. The main subunits of complex b-c1 are: cytochrome b, cytochrome c1 and the Rieske protein. Heme b is required as a cofactor.

The protein localises to the cell membrane. In terms of biological role, component of the ubiquinol-cytochrome c reductase complex (complex III or cytochrome b-c1 complex), which is a respiratory chain that generates an electrochemical potential coupled to ATP synthesis. The polypeptide is Cytochrome b (petB) (Rhodospirillum rubrum).